The primary structure comprises 359 residues: Peptide chain release factor 1 (359 aa).

Glutamine 236 carries the N5-methylglutamine modification. Residues glutamine 288–arginine 307 are disordered. Over residues alanine 293 to arginine 307 the composition is skewed to basic and acidic residues.

Belongs to the prokaryotic/mitochondrial release factor family. In terms of processing, methylated by PrmC. Methylation increases the termination efficiency of RF1.

The protein resides in the cytoplasm. Peptide chain release factor 1 directs the termination of translation in response to the peptide chain termination codons UAG and UAA. The chain is Peptide chain release factor 1 (prfA) from Streptococcus gordonii (strain Challis / ATCC 35105 / BCRC 15272 / CH1 / DL1 / V288).